A 368-amino-acid chain; its full sequence is uncharacterized protein (368 aa).

Disordered stretches follow at residues 1-22 (MEKS…LPEK) and 282-317 (KHLG…EPPA). A compositionally biased stretch (basic and acidic residues) spans 293 to 311 (KRVEKMKKAYKESKEEKAS).

This is an uncharacterized protein from Mus musculus (Mouse).